We begin with the raw amino-acid sequence, 404 residues long: G1/S-specific cyclin-E2 (404 aa).

Residues 1-44 (MSRRSSRLQAKQQPQPSQTESPQEAQIIQAKKRKTTQDVKKRRE) are disordered. A compositionally biased stretch (low complexity) spans 12–26 (QQPQPSQTESPQEAQ). Position 21 is a phosphoserine (serine 21). Positions 35–44 (TTQDVKKRRE) are enriched in basic and acidic residues. Residue lysine 348 is modified to N6-lactoyllysine. A Phosphoserine modification is found at serine 383. Residue threonine 392 is modified to Phosphothreonine.

This sequence belongs to the cyclin family. Cyclin E subfamily. In terms of assembly, interacts with the CDK2 (in vivo) and CDK3 (in vitro) protein kinases to form a serine/threonine kinase holoenzyme complex. The cyclin subunit imparts substrate specificity to the complex. Phosphorylation by CDK2 triggers its release from CDK2 and degradation via the ubiquitin proteasome pathway. Post-translationally, lactylated at Lys-348. Delactylated by SIRT3. As to expression, according to PubMed:9858585, highest levels of expression in adult testis, thymus and brain. Lower levels in placenta, spleen and colon. Consistently elevated levels in tumor-derived cells compared to non-transformed proliferating cells. According to PubMed:9840927: low levels in thymus, prostate, brain, skeletal muscle, and kidney. Elevated levels in lung. According to PubMed:9840943 highly expressed in testis, placenta, thymus and brain. In a lesser extent in small intestine and colon.

The protein resides in the nucleus. Essential for the control of the cell cycle at the late G1 and early S phase. In Homo sapiens (Human), this protein is G1/S-specific cyclin-E2 (CCNE2).